The following is a 1171-amino-acid chain: ATP-dependent helicase/deoxyribonuclease subunit B (1171 aa).

One can recognise a UvrD-like helicase ATP-binding domain in the interval 1–390 (MSLRFVIGRA…HPLVECIRSA (390 aa)). 8–15 (GRAGSGKS) lines the ATP pocket. The UvrD-like helicase C-terminal domain maps to 281 to 587 (MEQPRFHSPA…QFANIPPSLD (307 aa)). Cys-805, Cys-1129, Cys-1132, and Cys-1138 together coordinate [4Fe-4S] cluster.

It belongs to the helicase family. AddB/RexB type 1 subfamily. As to quaternary structure, heterodimer of AddA and AddB. It depends on Mg(2+) as a cofactor. Requires [4Fe-4S] cluster as cofactor.

Its function is as follows. The heterodimer acts as both an ATP-dependent DNA helicase and an ATP-dependent, dual-direction single-stranded exonuclease. Recognizes the chi site generating a DNA molecule suitable for the initiation of homologous recombination. The AddB subunit has 5' -&gt; 3' nuclease activity but not helicase activity. The protein is ATP-dependent helicase/deoxyribonuclease subunit B of Bacillus cereus (strain ATCC 10987 / NRS 248).